Reading from the N-terminus, the 487-residue chain is Phosphatidylserine synthase 2 (487 aa).

Basic and acidic residues predominate over residues 1-10 (MRRGERRDAG). Residues 1-50 (MRRGERRDAGGPRPESPVPAGRASLEEPPDGPSAGQATGPGEGRRSTESE) form a disordered region. Over 1–62 (MRRGERRDAG…DDGTNTFFWR (62 aa)) the chain is Cytoplasmic. 2 positions are modified to phosphoserine: S16 and S24. Residues 63–83 (AHTLTVLFILTCTLGYVTLLE) traverse the membrane as a helical segment. The Lumenal portion of the chain corresponds to 84 to 96 (ETPQDTAYNTKRG). A helical transmembrane segment spans residues 97 to 117 (IVASILVFLCFGVTQAKDGPF). Over 118–126 (SRPHPAYWR) the chain is Cytoplasmic. A helical transmembrane segment spans residues 127–147 (FWLCVSVVYELFLIFILFQTV). Topologically, residues 148 to 313 (QDGRQFLKYV…EWKPASSLRR (166 aa)) are lumenal. N-linked (GlcNAc...) asparagine glycosylation is present at N181. Residues 314–334 (WLAVCGIILVFLLAELNTFYL) form a helical membrane-spanning segment. K335 is a topological domain (cytoplasmic). A helical membrane pass occupies residues 336-356 (FVLWMPPEHYLVLLRLVFFVN). Topologically, residues 357–376 (VGGVAMREIYDFMDDPKPHK) are lumenal. A helical membrane pass occupies residues 377 to 397 (KLGPQAWLVAAITATELLIVV). Residues 398–403 (KYDPHT) lie on the Cytoplasmic side of the membrane. A helical transmembrane segment spans residues 404 to 424 (LTLSLPFYISQCWTLGSVLAL). Residues 425–487 (TWTVWRFFLR…AEGEGAPTPN (63 aa)) are Lumenal-facing. Residues 451-487 (KDDQGSTVGNGDQHPLGLDEDLLGPGVAEGEGAPTPN) form a disordered region. T485 is subject to Phosphothreonine.

This sequence belongs to the phosphatidyl serine synthase family.

The protein localises to the endoplasmic reticulum membrane. The enzyme catalyses a 1,2-diacyl-sn-glycero-3-phosphoethanolamine + L-serine = a 1,2-diacyl-sn-glycero-3-phospho-L-serine + ethanolamine. The catalysed reaction is 1-hexadecanoyl-2-(9Z-octadecenoyl)-sn-glycero-3-phosphoethanolamine + L-serine = 1-hexadecanoyl-2-(9Z-octadecenoyl)-sn-glycero-3-phospho-L-serine + ethanolamine. It carries out the reaction 1-hexadecanoyl-2-(4Z,7Z,10Z,13Z,16Z,19Z-docosahexaenoyl)-sn-glycero-3-phosphoethanolamine + L-serine = 1-hexadecanoyl-2-(4Z,7Z,10Z,13Z,16Z,19Z-docosahexaenoyl)-sn-glycero-3-phosphoserine + ethanolamine. It catalyses the reaction 1-octadecanoyl-2-(5Z,8Z,11Z,14Z)-eicosatetraenoyl-sn-glycero-3-phosphoethanolamine + L-serine = 1-octadecanoyl-2-(5Z,8Z,11Z,14Z)-eicosatetraenoyl-sn-glycero-3-phosphoserine + ethanolamine. The enzyme catalyses 1-octadecanoyl-2-(4Z,7Z,10Z,13Z,16Z,19Z-docosahexaenoyl)-sn-glycero-3-phosphoethanolamine + L-serine = 1-octadecanoyl-2-(4Z,7Z,10Z,13Z,16Z,19Z-docosahexaenoyl)-sn-glycero-3-phosphoserine + ethanolamine. The catalysed reaction is 1-(1Z-octadecenyl)-2-(4Z,7Z,10Z,13Z,16Z,19Z-docosahexaenoyl)-sn-glycero-3-phosphoethanolamine + L-serine = 1-(1Z-octadecenyl)-2-(4Z,7Z,10Z,13Z,16Z,19Z-docosahexaenoyl)-sn-glycero-3-phospho-L-serine + ethanolamine. It carries out the reaction 1-octadecanoyl-2-(9Z-octadecenoyl)-sn-glycero-3-phosphoethanolamine + L-serine = 1-octadecanoyl-2-(9Z-octadecenoyl)-sn-glycero-3-phospho-L-serine + ethanolamine. It catalyses the reaction 1-(1Z-octadecenyl)-2-(9Z-octadecenoyl)-sn-glycero-3-phosphoethanolamine + L-serine = 1-(1Z-octadecenyl)-2-(9Z-octadecenoyl)-sn-glycero-3-phospho-L-serine + ethanolamine. The enzyme catalyses 1-(1Z-octadecenyl)-2-(5Z,8Z,11Z,14Z- eicosatetraenoyl)-sn-glycero-3-phosphoethanolamine + L-serine = 1-(1Z-octadecenyl)-2-(5Z,8Z,11Z,14Z-eicosatetraenoyl)-sn-glycero-3-phospho-L-serine + ethanolamine. The protein operates within phospholipid metabolism; phosphatidylserine biosynthesis. With respect to regulation, requires calcium ions. Inhibited by exogenous phosphatidylserine. In terms of biological role, catalyzes a base-exchange reaction in which the polar head group of phosphatidylethanolamine (PE) or phosphatidylcholine (PC) is replaced by L-serine. Catalyzes the conversion of phosphatatidylethanolamine and does not act on phosphatidylcholine. Can utilize both phosphatidylethanolamine (PE) plasmalogen and diacyl PE as substrate and the latter is six times better utilized, indicating the importance of an ester linkage at the sn-1 position. Although it shows no sn-1 fatty acyl preference, exhibits significant preference towards docosahexaenoic acid (22:6n-3) compared with 18:1 or 20:4 at the sn-2 position. The sequence is that of Phosphatidylserine synthase 2 (PTDSS2) from Homo sapiens (Human).